Consider the following 276-residue polypeptide: Large ribosomal subunit protein uL2 (276 aa).

The segment at 224 to 265 is disordered; sequence VMNPVDHPHGGGEGRTASGRHPVSPWGLPTKGYKTRNNKRTD.

This sequence belongs to the universal ribosomal protein uL2 family. Part of the 50S ribosomal subunit. Forms a bridge to the 30S subunit in the 70S ribosome.

Its function is as follows. One of the primary rRNA binding proteins. Required for association of the 30S and 50S subunits to form the 70S ribosome, for tRNA binding and peptide bond formation. It has been suggested to have peptidyltransferase activity; this is somewhat controversial. Makes several contacts with the 16S rRNA in the 70S ribosome. The protein is Large ribosomal subunit protein uL2 of Dichelobacter nodosus (strain VCS1703A).